A 646-amino-acid chain; its full sequence is Peptidylprolyl isomerase domain and WD repeat-containing protein 1 (646 aa).

A disordered region spans residues 1–30 (MAAESGSDFQQRRRRRRDPEEPEKTELSER). Position 2 is an N-acetylalanine (Ala-2). Over residues 17-30 (RDPEEPEKTELSER) the composition is skewed to basic and acidic residues. WD repeat units lie at residues 88–126 (MHRD…IEFV), 131–170 (SHLG…MINM), 221–260 (LHTS…YKFP), and 278–319 (KCKA…RVFD). Over residues 455 to 478 (EPEDTKSADSDRDVFNEKPSKEEV) the composition is skewed to basic and acidic residues. Residues 455–490 (EPEDTKSADSDRDVFNEKPSKEEVMAATQAEGPKRV) form a disordered region. The PPIase cyclophilin-type domain occupies 490-645 (VSDSAIIHTS…EDVSIINITV (156 aa)).

The protein belongs to the cyclophilin-type PPIase family. PPIL1 subfamily. In terms of assembly, identified in the spliceosome C complex.

Its subcellular location is the nucleus. The enzyme catalyses [protein]-peptidylproline (omega=180) = [protein]-peptidylproline (omega=0). Its activity is regulated as follows. Inhibited by cyclosporin A (CsA). In terms of biological role, PPIase that catalyzes the cis-trans isomerization of proline imidic peptide bonds in oligopeptides and may therefore assist protein folding. May be involved in pre-mRNA splicing. The chain is Peptidylprolyl isomerase domain and WD repeat-containing protein 1 from Pongo abelii (Sumatran orangutan).